We begin with the raw amino-acid sequence, 413 residues long: Tryptophan synthase beta chain (413 aa).

The residue at position 106 (lysine 106) is an N6-(pyridoxal phosphate)lysine.

Belongs to the TrpB family. As to quaternary structure, tetramer of two alpha and two beta chains. Pyridoxal 5'-phosphate serves as cofactor.

It carries out the reaction (1S,2R)-1-C-(indol-3-yl)glycerol 3-phosphate + L-serine = D-glyceraldehyde 3-phosphate + L-tryptophan + H2O. It functions in the pathway amino-acid biosynthesis; L-tryptophan biosynthesis; L-tryptophan from chorismate: step 5/5. In terms of biological role, the beta subunit is responsible for the synthesis of L-tryptophan from indole and L-serine. The sequence is that of Tryptophan synthase beta chain from Methylorubrum populi (strain ATCC BAA-705 / NCIMB 13946 / BJ001) (Methylobacterium populi).